We begin with the raw amino-acid sequence, 527 residues long: Probable malate:quinone oxidoreductase 2 (527 aa).

Belongs to the MQO family. Requires FAD as cofactor.

It carries out the reaction (S)-malate + a quinone = a quinol + oxaloacetate. It participates in carbohydrate metabolism; tricarboxylic acid cycle; oxaloacetate from (S)-malate (quinone route): step 1/1. The sequence is that of Probable malate:quinone oxidoreductase 2 from Pseudomonas putida (strain ATCC 47054 / DSM 6125 / CFBP 8728 / NCIMB 11950 / KT2440).